The sequence spans 420 residues: ATP phosphoribosyltransferase regulatory subunit (420 aa).

Belongs to the class-II aminoacyl-tRNA synthetase family. HisZ subfamily. As to quaternary structure, heteromultimer composed of HisG and HisZ subunits.

Its subcellular location is the cytoplasm. It participates in amino-acid biosynthesis; L-histidine biosynthesis; L-histidine from 5-phospho-alpha-D-ribose 1-diphosphate: step 1/9. In terms of biological role, required for the first step of histidine biosynthesis. May allow the feedback regulation of ATP phosphoribosyltransferase activity by histidine. This Bacillus cereus (strain ZK / E33L) protein is ATP phosphoribosyltransferase regulatory subunit.